Here is a 293-residue protein sequence, read N- to C-terminus: Ribosomal protein L11 methyltransferase (293 aa).

4 residues coordinate S-adenosyl-L-methionine: Thr145, Gly166, Asp188, and Asn230.

Belongs to the methyltransferase superfamily. PrmA family.

It localises to the cytoplasm. It catalyses the reaction L-lysyl-[protein] + 3 S-adenosyl-L-methionine = N(6),N(6),N(6)-trimethyl-L-lysyl-[protein] + 3 S-adenosyl-L-homocysteine + 3 H(+). Its function is as follows. Methylates ribosomal protein L11. This chain is Ribosomal protein L11 methyltransferase, found in Salmonella dublin (strain CT_02021853).